The primary structure comprises 497 residues: Probable cytosol aminopeptidase (497 aa).

Residues K267 and D272 each coordinate Mn(2+). K279 is an active-site residue. 3 residues coordinate Mn(2+): D290, D349, and E351. R353 is an active-site residue.

It belongs to the peptidase M17 family. Mn(2+) serves as cofactor.

Its subcellular location is the cytoplasm. It carries out the reaction Release of an N-terminal amino acid, Xaa-|-Yaa-, in which Xaa is preferably Leu, but may be other amino acids including Pro although not Arg or Lys, and Yaa may be Pro. Amino acid amides and methyl esters are also readily hydrolyzed, but rates on arylamides are exceedingly low.. The catalysed reaction is Release of an N-terminal amino acid, preferentially leucine, but not glutamic or aspartic acids.. Presumably involved in the processing and regular turnover of intracellular proteins. Catalyzes the removal of unsubstituted N-terminal amino acids from various peptides. The polypeptide is Probable cytosol aminopeptidase (Pseudomonas entomophila (strain L48)).